Here is a 97-residue protein sequence, read N- to C-terminus: MTLFSSISSMSSSMTSSKSSLASFGIGTSMGSNSIACSVGSGSCGSGSGSGSGGCGDLTGGAKSSGGSCGGKGGSHNHGHGHGPHGHGGKGSGGSCS.

Disordered regions lie at residues 1–23 (MTLFSSISSMSSSMTSSKSSLAS) and 62–97 (AKSSGGSCGGKGGSHNHGHGHGPHGHGGKGSGGSCS). Gly residues predominate over residues 62-74 (AKSSGGSCGGKGG). Over residues 75-88 (SHNHGHGHGPHGHG) the composition is skewed to basic residues.

Belongs to the hssA/B family.

This is HssA/B-like protein 32 (hssl32) from Dictyostelium discoideum (Social amoeba).